A 179-amino-acid chain; its full sequence is Replication restart protein DnaT (179 aa).

Positions 154–179 (SNGGLPKRDVNTVSEPDSQIPPGFRG) are disordered.

This sequence belongs to the DnaT family. In terms of assembly, homooligomerizes. Interacts with PriB. Component of the replication restart primosome. Primosome assembly occurs via a 'hand-off' mechanism. PriA binds to replication forks, subsequently PriB then DnaT bind; DnaT then displaces ssDNA to generate the helicase loading substrate.

Its function is as follows. Involved in the restart of stalled replication forks, which reloads the replicative helicase on sites other than the origin of replication. Can function in multiple replication restart pathways. Displaces ssDNA from a PriB-ssDNA complex. Probably forms a spiral filament on ssDNA. The chain is Replication restart protein DnaT from Escherichia coli O127:H6 (strain E2348/69 / EPEC).